A 156-amino-acid chain; its full sequence is 6,7-dimethyl-8-ribityllumazine synthase (156 aa).

5-amino-6-(D-ribitylamino)uracil is bound by residues phenylalanine 24, 58-60, and 82-84; these read AFE and VII. 87–88 contributes to the (2S)-2-hydroxy-3-oxobutyl phosphate binding site; it reads ST. Residue histidine 90 is the Proton donor of the active site. A 5-amino-6-(D-ribitylamino)uracil-binding site is contributed by phenylalanine 115. Position 129 (arginine 129) interacts with (2S)-2-hydroxy-3-oxobutyl phosphate.

Belongs to the DMRL synthase family.

It catalyses the reaction (2S)-2-hydroxy-3-oxobutyl phosphate + 5-amino-6-(D-ribitylamino)uracil = 6,7-dimethyl-8-(1-D-ribityl)lumazine + phosphate + 2 H2O + H(+). The protein operates within cofactor biosynthesis; riboflavin biosynthesis; riboflavin from 2-hydroxy-3-oxobutyl phosphate and 5-amino-6-(D-ribitylamino)uracil: step 1/2. In terms of biological role, catalyzes the formation of 6,7-dimethyl-8-ribityllumazine by condensation of 5-amino-6-(D-ribitylamino)uracil with 3,4-dihydroxy-2-butanone 4-phosphate. This is the penultimate step in the biosynthesis of riboflavin. This Chlorobaculum parvum (strain DSM 263 / NCIMB 8327) (Chlorobium vibrioforme subsp. thiosulfatophilum) protein is 6,7-dimethyl-8-ribityllumazine synthase.